Consider the following 1290-residue polypeptide: Vacuolating cytotoxin autotransporter (1290 aa).

Positions 1–33 (MEIQQTHRKINRPLVSLALVGALVSITPQQSHA) are cleaved as a signal peptide. Residues 326–374 (PPEGGYKDKPKDKPSNTTQNNANNNQQNSAQNNSNTQVINPPNSAQKTE) are disordered. Residues 330–339 (GYKDKPKDKP) show a composition bias toward basic and acidic residues. The segment covering 340–362 (SNTTQNNANNNQQNSAQNNSNTQ) has biased composition (low complexity). The span at 363 to 374 (VINPPNSAQKTE) shows a compositional bias: polar residues. The Autotransporter domain occupies 1018-1290 (KYEKPTNVWA…ASNLGMRYSF (273 aa)).

It is found in the periplasm. The protein localises to the secreted. It localises to the cell surface. Its subcellular location is the cell outer membrane. In terms of biological role, induces vacuolation of eukaryotic cells. Causes ulceration and gastric lesions. In Helicobacter pylori (strain ATCC 700392 / 26695) (Campylobacter pylori), this protein is Vacuolating cytotoxin autotransporter (vacA).